Reading from the N-terminus, the 279-residue chain is Dermonecrotic toxin StSicTox-betaIB1i (279 aa).

His-12 is an active-site residue. Mg(2+)-binding residues include Glu-32 and Asp-34. His-48 serves as the catalytic Nucleophile. 2 cysteine pairs are disulfide-bonded: Cys-52-Cys-58 and Cys-54-Cys-198. Mg(2+) is bound at residue Asp-92.

Belongs to the arthropod phospholipase D family. Class II subfamily. Class IIb sub-subfamily. It depends on Mg(2+) as a cofactor. In terms of tissue distribution, expressed by the venom gland.

It is found in the secreted. It carries out the reaction an N-(acyl)-sphingosylphosphocholine = an N-(acyl)-sphingosyl-1,3-cyclic phosphate + choline. It catalyses the reaction N-hexanoyl-sphing-4-enine-1-phosphocholine = N-(hexanoyl)-sphing-4-enine-1,3-cyclic phosphate + choline. The catalysed reaction is an N-(acyl)-sphingosylphosphoethanolamine = an N-(acyl)-sphingosyl-1,3-cyclic phosphate + ethanolamine. The enzyme catalyses N-dodecanoyl-heptadecasphing-4-enine-1-phosphoethanolamine = N-dodecanoyl-heptadecasphing-4-enine-1,3-cyclic phosphate + ethanolamine. It carries out the reaction a 1-acyl-sn-glycero-3-phosphoethanolamine = a 1-acyl-sn-glycero-2,3-cyclic phosphate + ethanolamine. It catalyses the reaction 1-tetradecanoyl-sn-glycero-3-phosphoethanolamine = 1-tetradecanoyl-sn-glycero-2,3-cyclic phosphate + ethanolamine. In terms of biological role, dermonecrotic toxins cleave the phosphodiester linkage between the phosphate and headgroup of certain phospholipids (sphingolipid and lysolipid substrates), forming an alcohol (often choline) and a cyclic phosphate. This toxin acts on lysophosphatidylethanolamine (LPE) and ceramide phosphoethanolamine (CPE) with high activity. This toxin acts on sphingomyelin (SM) with very low activity and is not active on lysophosphatidylserine (LPS), lysophosphatidylcholine (LPC) and lysophosphatidylglycerol (LPG). It acts by transphosphatidylation, releasing exclusively cyclic phosphate as second products. It is not surprising that spider toxins have affinity for ethanolamine-containing sphingolipids since they are common in insect prey. Induces dermonecrosis, hemolysis, increased vascular permeability, edema, inflammatory response, and platelet aggregation. The chain is Dermonecrotic toxin StSicTox-betaIB1i from Sicarius terrosus (Cave spider).